We begin with the raw amino-acid sequence, 639 residues long: Mediator of RNA polymerase II transcription subunit 17 (639 aa).

A coiled-coil region spans residues Arg-160–Arg-187.

The protein belongs to the Mediator complex subunit 17 family. In terms of assembly, component of the Mediator complex.

The protein localises to the nucleus. Its function is as follows. Component of the Mediator complex, a coactivator involved in the regulated transcription of nearly all RNA polymerase II-dependent genes. Mediator functions as a bridge to convey information from gene-specific regulatory proteins to the basal RNA polymerase II transcription machinery. Mediator is recruited to promoters by direct interactions with regulatory proteins and serves as a scaffold for the assembly of a functional preinitiation complex with RNA polymerase II and the general transcription factors. This chain is Mediator of RNA polymerase II transcription subunit 17 (srb4), found in Aspergillus fumigatus (strain ATCC MYA-4609 / CBS 101355 / FGSC A1100 / Af293) (Neosartorya fumigata).